We begin with the raw amino-acid sequence, 365 residues long: AP2/ERF and B3 domain-containing protein Os01g0141000 (365 aa).

The tract at residues M1–V24 is disordered. Positions R68–P123 form a DNA-binding region, AP2/ERF. Positions F182–N294 form a DNA-binding region, TF-B3.

Its subcellular location is the nucleus. The protein is AP2/ERF and B3 domain-containing protein Os01g0141000 of Oryza sativa subsp. japonica (Rice).